Here is a 366-residue protein sequence, read N- to C-terminus: Subtilisin-like protease het-Q2 (366 aa).

In terms of domain architecture, Peptidase S8 spans 1–321 (MSAISHHSLS…RVLMALGEKT (321 aa)). Catalysis depends on D35, which acts as the Charge relay system. The disordered stretch occupies residues 79-98 (DFCQPSPPGDRQGPPPQPHS). The segment covering 83 to 96 (PSPPGDRQGPPPQP) has biased composition (pro residues). Catalysis depends on charge relay system residues H105 and S266. Residues 261–283 (LVSGSSFATPVVVSVAALVLAFV) form a helical membrane-spanning segment.

Belongs to the peptidase S8 family.

The protein resides in the membrane. Serine protease involved in heterokaryon incompatibility, a process that ensures that during spontaneous vegetative cell fusion, only compatible cells from the same colony survive (non-self-recognition). In P.anserina, the het-q locus exists as 2 incompatible alleles, het-Q1 (AC B2AXJ5) and het-Q2 (this entry). Prevents cell fusion with strains containing the gasdermin-like protein het-Q1 by mediating proteolytic cleavage and maturation of het-Q1 during the allorecognition process, thereby triggering cell death. This is Subtilisin-like protease het-Q2 from Podospora anserina (Pleurage anserina).